The chain runs to 329 residues: Cytosolic arginine sensor for mTORC1 subunit 1 (329 aa).

Ser14 is subject to Phosphoserine; by PKB/AKT1. ACT domains follow at residues 72 to 138 and 260 to 321; these read AEAT…HTLA and GELW…EVLQ. L-arginine is bound by residues 111 to 112, Gly274, 280 to 281, and 300 to 304; these read SV, IV, and TFNFD.

It belongs to the GATS family. In terms of assembly, forms homodimers and heterodimers with CASTOR2. Interacts with the GATOR2 complex which is composed of MIOS, SEC13, SEH1L, WDR24 and WDR59; the interaction is negatively regulated by arginine. Interacts with TM4SF5; the interaction is positively regulated by leucine and is negatively regulated by arginine. Post-translationally, phosphorylation at Ser-14 by AKT1, promoting the interaction between CASTOR1 and RNF167. Ubiquitinated by RNF167 via 'Lys-29'-polyubiquitination, leading to its degradation, releasing the GATOR2 complex. Ubiquitination by RNF167 is promoted by phosphorylation at Ser-14 by AKT1. In terms of tissue distribution, widely expressed.

The protein localises to the cytoplasm. It localises to the cytosol. Its function is as follows. Functions as an intracellular arginine sensor within the amino acid-sensing branch of the TORC1 signaling pathway. As a homodimer or a heterodimer with CASTOR2, binds and inhibits the GATOR subcomplex GATOR2 and thereby mTORC1. Binding of arginine to CASTOR1 allosterically disrupts the interaction of CASTOR1-containing dimers with GATOR2 which can in turn activate mTORC1 and the TORC1 signaling pathway. This chain is Cytosolic arginine sensor for mTORC1 subunit 1, found in Homo sapiens (Human).